We begin with the raw amino-acid sequence, 192 residues long: MPTLLQKHEGYLTGHCLVAMPGMGDPRFEGTVIYLCAHTAEGAMGIVINRELEEISFPDIVGQLGIQPTPFCDDVRVQFGGPVETGRGFVLHTSDYQNEGTLSVDDSMALTATLDVLRAIASGDGPMRVIMALGYAGWGAGQLDGELKGNVWLTVPADRQLVFETAVKDKYTTAMGRLGIDPRLLSENAGHA.

This sequence belongs to the UPF0301 (AlgH) family.

This is UPF0301 protein Rru_A3059 from Rhodospirillum rubrum (strain ATCC 11170 / ATH 1.1.1 / DSM 467 / LMG 4362 / NCIMB 8255 / S1).